Reading from the N-terminus, the 242-residue chain is Triosephosphate isomerase (242 aa).

Position 8–10 (8–10 (NWK)) interacts with substrate. The active-site Electrophile is the His91. Residue Glu155 is the Proton acceptor of the active site. Substrate is bound by residues Gly161 and Ser192.

It belongs to the triosephosphate isomerase family. In terms of assembly, homodimer.

It is found in the cytoplasm. It carries out the reaction D-glyceraldehyde 3-phosphate = dihydroxyacetone phosphate. It functions in the pathway carbohydrate biosynthesis; gluconeogenesis. Its pathway is carbohydrate degradation; glycolysis; D-glyceraldehyde 3-phosphate from glycerone phosphate: step 1/1. In terms of biological role, involved in the gluconeogenesis. Catalyzes stereospecifically the conversion of dihydroxyacetone phosphate (DHAP) to D-glyceraldehyde-3-phosphate (G3P). This chain is Triosephosphate isomerase, found in Wolbachia pipientis wMel.